The primary structure comprises 553 residues: MAAVSLRLGDLVWGKLGRYPPWPGKIVNPPKDLKKPRGKKCFFVKFFGTEDHAWIKVEQLKPYHAHKEEMIKINKGKRFQQAVDAVEEFLRRAKGKDQTSSHNSSDDKNRRNSSEERSRPNSGDEKRKLSLSEGKVKKNMGEGKKRVSSGSSERGSKSPLKRAQEQSPRKRGRPPKDEKDLTIPESSTVKGMMAGPMAAFKWQPTASEPVKDADPHFHHFLLSQTEKPAVCYQAITKKLKICEEETGSTSIQAADSTAVNGSITPTDKKIGFLGLGLMGSGIVSNLLKMGHTVTVWNRTAEKCDLFIQEGARLGRTPAEVVSTCDITFACVSDPKAAKDLVLGPSGVLQGIRPGKCYVDMSTVDADTVTELAQVIVSRGGRFLEAPVSGNQQLSNDGMLVILAAGDRGLYEDCSSCFQAMGKTSFFLGEVGNAAKMMLIVNMVQGSFMATIAEGLTLAQVTGQSQQTLLDILNQGQLASIFLDQKCQNILQGNFKPDFYLKYIQKDLRLAIALGDAVNHPTPMAAAANEVYKRAKALDQSDNDMSAVYRAYIH.

Residues 8–66 (LGDLVWGKLGRYPPWPGKIVNPPKDLKKPRGKKCFFVKFFGTEDHAWIKVEQLKPYHAH) enclose the PWWP domain. 2 stretches are compositionally biased toward basic and acidic residues: residues 92-145 (RAKG…EGKK) and 162-182 (RAQE…KDLT). The disordered stretch occupies residues 92–188 (RAKGKDQTSS…KDLTIPESST (97 aa)). Serine 130 carries the phosphoserine modification. Residue lysine 135 forms a Glycyl lysine isopeptide (Lys-Gly) (interchain with G-Cter in SUMO2) linkage. Serine 167 carries the post-translational modification Phosphoserine. Positions 168–180 (PRKRGRPPKDEKD) form a DNA-binding region, a.T hook. Residues lysine 176, lysine 179, lysine 201, and lysine 211 each participate in a glycyl lysine isopeptide (Lys-Gly) (interchain with G-Cter in SUMO2) cross-link. The interval 214 to 217 (DPHF) is interaction with histone H3. An interaction with KDM1B region spans residues 216–225 (HFHHFLLSQT). Residues lysine 227, lysine 237, lysine 240, and lysine 269 each participate in a glycyl lysine isopeptide (Lys-Gly) (interchain with G-Cter in SUMO2) cross-link. The dehydrogenase domain stretch occupies residues 261-553 (GSITPTDKKI…MSAVYRAYIH (293 aa)). 271–285 (GFLGLGLMGSGIVSN) is an NAD(+) binding site. Lysine 302 participates in a covalent cross-link: Glycyl lysine isopeptide (Lys-Gly) (interchain with G-Cter in SUMO2). NAD(+)-binding residues include threonine 362 and lysine 505. Serine 540 is modified (phosphoserine).

It belongs to the HIBADH-related family. NP60 subfamily. As to quaternary structure, homotetramere. Interacts with MAPK14. Interacts with KDM1B at nucleosomes; this interaction stimulates H3K4me1 and H3K4me2 demethylation. Binds to mononucleosomes. Interacts with GATA4; the interaction is required for a synergistic activation of GATA4 target genes transcription.

The protein resides in the nucleus. It localises to the chromosome. In terms of biological role, cytokine-like nuclear factor with chromatin gene reader activity involved in chromatin modification and regulation of gene expression. Acts as a nucleosome-destabilizing factor that is recruited to genes during transcriptional activation. Recognizes and binds histone H3 without a preference for specific epigenetic markers and also binds DNA. Interacts with KDM1B and promotes its histone demethylase activity by facilitating the capture of H3 tails, they form a multifunctional enzyme complex that modifies transcribed chromatin and facilitates Pol II transcription through nucleosomes. Stimulates the acetylation of 'Lys-56' of nucleosomal histone H3 (H3K56ac) by EP300. With GATA4, co-binds a defined set of heart development genes and coregulates their expression during cardiomyocyte differentiation. Regulates p38 MAP kinase activity by mediating stress activation of MAPK14/p38alpha and specifically regulating MAPK14 signaling. Indirectly promotes phosphorylation of MAPK14 and activation of ATF2. The phosphorylation of MAPK14 requires upstream activity of MAP2K4 and MAP2K6. The sequence is that of Cytokine-like nuclear factor N-PAC from Homo sapiens (Human).